We begin with the raw amino-acid sequence, 2183 residues long: MGAQVSTQKTGAHETSLSASGNSIIHYTNINYYKDAASNSANRQDFTQDPSKFTEPVKDVMIKSLPALNSPTVEECGYSDRVRSITLGNSTITTQECANVVVGYGVWPDYLSDEEATAEDQPTQPDVATCRFYTLNSVKWEMQSAGWWWKFPDALSEMGLFGQNMQYHYLGRSGYTIHVQCNASKFHQGCLLVVCVPEAEMGCTNAENAPAYGDLCGGETAKSFEQNAATGKTAVQTAVCNAGMGVGVGNLTIYPHQWINLRTNNSATIVMPYINSVPMDNMFRHNNFTLMIIPFAPLDYVTGASSYIPITVTVAPMSAEYNGLRLAGHQGLPTMLTPGSTQFLTSDDFQSPSAMPQFDVTPEMNIPGQVRNLMEIAEVDSVVPINNLKANLMTMEAYRVQVRSTDEMGGQIFGFPLQPGASSVLQRTLLGEILNYYTHWSGSLKLTFVFCGSAMATGKFLLAYSPPGAGAPDSRKNAMLGTHVIWDVGLQSSCVLCVPWISQTHYRYVVDDKYTASGFISCWYQTNVIVPAEAQKSCYIMCFVSACNDFSVRMLRDTQFIKQTNFYQGPTEESVERAMGRVADTIARGPSNSEQIPALTAVETGHTSQVDPSDTMQTRHVHNYHSRSESSIENFLCRSACVIYIKYSSAESNNLKRYAEWVINTRQVAQLRRKMEMFTYIRCDMELTFVITSHQEMSTATNSDVPVQTHQIMYVPPGGPVPTSVNDYVWQTSTNPSIFWTEGNAPPRMSIPFMSIGNAYTMFYDGWSNFSRDGIYGYNSLNNMGTIYARHVNDSSPGGLTSTIRIYFKPKHVKAYVPRPPRLCQYKKAKSVNFDVEAVTAERASLITTGPYGHQSGAVYVGNYKVVNRHLATHVDWQNCVWEDYNRDLLVSTTTAHGCDTIARCQCTTGVYFCASKSKHYPVSFEGPGLVEVQESEYYPKRYQSHVLLATGFSEPGDCGGILRCEHGVIGLVTMGGEGVVGFADVRDLLWLEDDAMEQGVKDYVEQLGNAFGSGFTNQICEQVNLLKESLVGQDSILEKSLKALVKIISALVIVVRNHDDLITVTATLALIGCTSSPWRWLKHKVSQYYGIPMAERQNNGWLKKFTEMTNACKGMEWIAVKIQKFIEWLKVKILPEVKEKHEFLSRLKQLPLLESQIATIEQSAPSQSDQEQLFSNVQYFAHYCRKYAPLYAAEAKRVFSLEKKMSNYIQFKSKCRIEPVCLLLHGSPGAGKSVATNLIGRSLAEKLNSSVYSLPPDPDHFDGYKQQAVVIMDDLCQNPDGKDVSLFCQMVSSVDFVPPMAALEEKGILFTSPFVLASTNAGSINAPTVSDSRALARRFHFDMNIEVISMYSQNGKINMPMSVKTCDEECCPVNFKRCCPLVCGKAIQFIDRKTQVRYSLDMLVTEMFREYNHRHSVGATLEALFQGPPVYREIKISVTPETPPPPVIADLLKSVDRQAIREYCKEKGWLVPEIDSILQIEKHVSRAFICLQALTTFVSVAGIIYIIYKLFAGFQGAYTGMPNQKPKVPTLRQAKVQGPAFEFAVAMMKRNSSTVKTEYGEFTMLGIYDRWAVLPRHAKPGPTILMNDQEVGVLDAKELIDRDGTNLELTLLKLNRNEKFRDIRGFLAKEEVEVNEAVLAINTSKFPNMYIPVGRVTDYGFLNLGGTPTKRMLMYNFPTRAGQCGGVLMSTGKVLGIHVGGNGHQGFSAGLLKHYFNDEQGEIEFIESSKDAGFPVINTPSRTKLEPSVFHHVFEGNKEPAVLRNGDPRLKVNFEEAIFFKYIGNVNTHVDEYMLEAVDHYAGQLATLDINTEPMKLEDAVYGTEGLEALDLTTSAGYPYVALGIKKRDILSKKTKDLTKLKECMDKYGLNLPMVTYVKDELRSAEKVAKGKSRLIEASSLNDSVAMRQTFGNLYKAFHLNPGIVTGSAVGCDPDVFWSKIPVMLDGHLIAFDYSGYDASLSPVWFACLKLLLEKLGYTHKETNYIDYLCNSHHLYRDKHYFVRGGMPSGCSGTSIFNSMINNIIIRTLMLKVYKGIDLDQFRMIAYGDDVIASYPWPIDASLLAEAGKDYGLIMTPADKGECFNEVTWTNVTFLKRYFRADEQYPFLVHPVMPMKDIHESIRWTKDPKNTQDHVRSLCLLAWHNGEHEYEEFIQKIRSVPVGRCLTLPAFSTLRRKWLDSF.

Residue Gly2 is the site of N-myristoyl glycine; by host attachment. Residues 2–1493 (GAQVSTQKTG…HVSRAFICLQ (1492 aa)) lie on the Cytoplasmic side of the membrane. The interval 566-582 (FYQGPTEESVERAMGRV) is amphipathic alpha-helix. Active-site for protease 2A activity residues include His870 and Asp888. Residues Cys905 and Cys907 each contribute to the Zn(2+) site. The active-site For protease 2A activity is the Cys959. Cys965 and His967 together coordinate Zn(2+). Residues 1099 to 1171 (NNGWLKKFTE…EQSAPSQSDQ (73 aa)) form a membrane-binding region. The segment at 1099–1237 (NNGWLKKFTE…SPGAGKSVAT (139 aa)) is oligomerization. An RNA-binding region spans residues 1120 to 1124 (AVKIQ). Positions 1203 to 1359 (EKKMSNYIQF…SMYSQNGKIN (157 aa)) constitute an SF3 helicase domain. Zn(2+) is bound by residues Cys1367, Cys1379, and Cys1384. Residues 1367 to 1384 (CDEECCPVNFKRCCPLVC) form a C4-type; degenerate zinc finger. The interval 1411–1418 (EYNHRHSV) is RNA-binding. Residues 1422–1427 (LEALFQ) are oligomerization. The stretch at 1494–1509 (ALTTFVSVAGIIYIIY) is an intramembrane region. Topologically, residues 1510 to 2183 (KLFAGFQGAY…TLRRKWLDSF (674 aa)) are cytoplasmic. Tyr1519 is modified (O-(5'-phospho-RNA)-tyrosine). One can recognise a Peptidase C3 domain in the interval 1539–1717 (GPAFEFAVAM…FSAGLLKHYF (179 aa)). Catalysis depends on for protease 3C activity residues His1578, Glu1609, and Cys1685. The RdRp catalytic domain occupies 1948 to 2064 (GHLIAFDYSG…SYPWPIDASL (117 aa)). Residues Asp1954 and Asp2050 each contribute to the Mg(2+) site.

Belongs to the picornaviruses polyprotein family. Interacts with capsid protein VP1 and capsid protein VP3 to form heterotrimeric protomers. In terms of assembly, interacts with capsid protein VP0, and capsid protein VP3 to form heterotrimeric protomers. Five protomers subsequently associate to form pentamers which serve as building blocks for the capsid. Interacts with capsid protein VP2, capsid protein VP3 and capsid protein VP4 following cleavage of capsid protein VP0. Interacts with host CXADR. As to quaternary structure, interacts with capsid protein VP1 and capsid protein VP3 in the mature capsid. Interacts with capsid protein VP0 and capsid protein VP1 to form heterotrimeric protomers. Five protomers subsequently associate to form pentamers which serve as building blocks for the capsid. Interacts with capsid protein VP4 in the mature capsid. Interacts with protein 2C; this interaction may be important for virion morphogenesis. In terms of assembly, interacts with capsid protein VP1 and capsid protein VP3. As to quaternary structure, homodimer. Homohexamer; forms a hexameric ring structure with 6-fold symmetry characteristic of AAA+ ATPases. Interacts (via N-terminus) with host RTN3 (via reticulon domain); this interaction is important for viral replication. Interacts with capsid protein VP3; this interaction may be important for virion morphogenesis. In terms of assembly, interacts with protein 3CD. As to quaternary structure, homodimer. Interacts with host GBF1. Interacts (via GOLD domain) with host ACBD3 (via GOLD domain); this interaction allows the formation of a viral protein 3A/ACBD3 heterotetramer with a 2:2 stoichiometry, which will stimulate the recruitment of host PI4KB in order to synthesize PI4P at the viral RNA replication sites. Interacts with RNA-directed RNA polymerase. In terms of assembly, interacts with protein 3AB and with RNA-directed RNA polymerase. As to quaternary structure, interacts with Viral protein genome-linked and with protein 3CD. Mg(2+) serves as cofactor. In terms of processing, specific enzymatic cleavages in vivo by the viral proteases yield processing intermediates and the mature proteins. Myristoylation is required for the formation of pentamers during virus assembly. Further assembly of 12 pentamers and a molecule of genomic RNA generates the provirion. Post-translationally, during virion maturation, immature virions are rendered infectious following cleavage of VP0 into VP4 and VP2. This maturation seems to be an autocatalytic event triggered by the presence of RNA in the capsid and it is followed by a conformational change infectious virion. In terms of processing, myristoylation is required during RNA encapsidation and formation of the mature virus particle. VPg is uridylylated by the polymerase into VPg-pUpU. This acts as a nucleotide-peptide primer for the genomic RNA replication.

The protein resides in the virion. The protein localises to the host cytoplasm. Its subcellular location is the host cytoplasmic vesicle membrane. It is found in the host nucleus. It carries out the reaction a ribonucleoside 5'-triphosphate + H2O = a ribonucleoside 5'-diphosphate + phosphate + H(+). The enzyme catalyses Selective cleavage of Tyr-|-Gly bond in the picornavirus polyprotein.. It catalyses the reaction RNA(n) + a ribonucleoside 5'-triphosphate = RNA(n+1) + diphosphate. The catalysed reaction is Selective cleavage of Gln-|-Gly bond in the poliovirus polyprotein. In other picornavirus reactions Glu may be substituted for Gln, and Ser or Thr for Gly.. Its activity is regulated as follows. Replication or transcription is subject to high level of random mutations by the nucleotide analog ribavirin. In terms of biological role, forms an icosahedral capsid of pseudo T=3 symmetry with capsid proteins VP2 and VP3. The capsid is 300 Angstroms in diameter, composed of 60 copies of each capsid protein and enclosing the viral positive strand RNA genome. Capsid protein VP1 mainly forms the vertices of the capsid. Capsid protein VP1 interacts with host CXADR to provide virion attachment to target host cells. This attachment induces virion internalization. Tyrosine kinases are probably involved in the entry process. After binding to its receptor, the capsid undergoes conformational changes. Capsid protein VP1 N-terminus (that contains an amphipathic alpha-helix) and capsid protein VP4 are externalized. Together, they shape a pore in the host membrane through which viral genome is translocated to host cell cytoplasm. Functionally, forms an icosahedral capsid of pseudo T=3 symmetry with capsid proteins VP2 and VP3. The capsid is 300 Angstroms in diameter, composed of 60 copies of each capsid protein and enclosing the viral positive strand RNA genome. Its function is as follows. Lies on the inner surface of the capsid shell. After binding to the host receptor, the capsid undergoes conformational changes. Capsid protein VP4 is released, Capsid protein VP1 N-terminus is externalized, and together, they shape a pore in the host membrane through which the viral genome is translocated into the host cell cytoplasm. Component of immature procapsids, which is cleaved into capsid proteins VP4 and VP2 after maturation. Allows the capsid to remain inactive before the maturation step. In terms of biological role, cysteine protease that cleaves viral polyprotein and specific host proteins. It is responsible for the autocatalytic cleavage between the P1 and P2 regions, which is the first cleavage occurring in the polyprotein. Also cleaves the host translation initiation factor EIF4G1, in order to shut down the capped cellular mRNA translation. Inhibits the host nucleus-cytoplasm protein and RNA trafficking by cleaving host members of the nuclear pores. Counteracts stress granule formation probably by antagonizing its assembly or promoting its dissassembly. Cleaves and inhibits host IFIH1/MDA5, thereby inhibiting the type-I IFN production and the establishment of the antiviral state. Cleaves and inhibits host MAVS, thereby inhibiting the type-I IFN production and the establishment of the antiviral state. Functionally, plays an essential role in the virus replication cycle by acting as a viroporin. Creates a pore in the host endoplasmic reticulum and as a consequence releases Ca2+ in the cytoplasm of infected cell. In turn, high levels of cytoplasmic calcium may trigger membrane trafficking and transport of viral ER-associated proteins to viroplasms, sites of viral genome replication. Its function is as follows. Induces and associates with structural rearrangements of intracellular membranes. Displays RNA-binding, nucleotide binding and NTPase activities. May play a role in virion morphogenesis and viral RNA encapsidation by interacting with the capsid protein VP3. Localizes the viral replication complex to the surface of membranous vesicles. Together with protein 3CD binds the Cis-Active RNA Element (CRE) which is involved in RNA synthesis initiation. Acts as a cofactor to stimulate the activity of 3D polymerase, maybe through a nucleid acid chaperone activity. In terms of biological role, localizes the viral replication complex to the surface of membranous vesicles. It inhibits host cell endoplasmic reticulum-to-Golgi apparatus transport and causes the disassembly of the Golgi complex, possibly through GBF1 interaction. This would result in depletion of MHC, trail receptors and IFN receptors at the host cell surface. Plays an essential role in viral RNA replication by recruiting ACBD3 and PI4KB at the viral replication sites, thereby allowing the formation of the rearranged membranous structures where viral replication takes place. Functionally, acts as a primer for viral RNA replication and remains covalently bound to viral genomic RNA. VPg is uridylylated prior to priming replication into VPg-pUpU. The oriI viral genomic sequence may act as a template for this. The VPg-pUpU is then used as primer on the genomic RNA poly(A) by the RNA-dependent RNA polymerase to replicate the viral genome. During genome replication, the VPg-RNA linkage is removed by the host TDP2, thereby accelerating replication. During the late stage of the replication cycle, host TDP2 is excluded from sites of viral RNA synthesis and encapsidation, allowing for the generation of progeny virions. Its function is as follows. Involved in the viral replication complex and viral polypeptide maturation. It exhibits protease activity with a specificity and catalytic efficiency that is different from protease 3C. Protein 3CD lacks polymerase activity. Protein 3CD binds to the 5'UTR of the viral genome. Replicates the viral genomic RNA on the surface of intracellular membranes. May form linear arrays of subunits that propagate along a strong head-to-tail interaction called interface-I. Covalently attaches UMP to a tyrosine of VPg, which is used to prime RNA synthesis. The positive stranded RNA genome is first replicated at virus induced membranous vesicles, creating a dsRNA genomic replication form. This dsRNA is then used as template to synthesize positive stranded RNA genomes. ss(+)RNA genomes are either translated, replicated or encapsidated. In terms of biological role, major viral protease that mediates proteolytic processing of the polyprotein. Cleaves host EIF5B, contributing to host translation shutoff. Also cleaves host PABPC1, contributing to host translation shutoff. Cleaves host NLRP1, triggers host N-glycine-mediated degradation of the autoinhibitory NLRP1 N-terminal fragment. This is Genome polyprotein from Coxsackievirus B4 (strain JVB / Benschoten / New York/51).